The sequence spans 424 residues: Carbohydrate sulfotransferase 8 (424 aa).

The Cytoplasmic segment spans residues 1 to 10; the sequence is MTLRPGTMRL. A helical; Signal-anchor for type II membrane protein membrane pass occupies residues 11–31; the sequence is ACMFSSILLFGAAGLLLFISL. The Lumenal portion of the chain corresponds to 32 to 424; that stretch reads QDPTELAPQQ…NYSKPFADLY (393 aa). Residues 47–107 are disordered; the sequence is FNIRPRQPHH…PLQRGTRLRL (61 aa). The span at 66–77 shows a compositional bias: basic and acidic residues; that stretch reads GDLKEPTERVTR. Asn-128 carries an N-linked (GlcNAc...) asparagine glycan. Residues 198 to 204 and 258 to 266 each bind 3'-phosphoadenylyl sulfate; these read PKAGCSN and REPFERLVS. Asn-294, Asn-367, and Asn-415 each carry an N-linked (GlcNAc...) asparagine glycan.

This sequence belongs to the sulfotransferase 2 family. In terms of tissue distribution, predominantly expressed in pituitary gland. In brain, it is expressed in pituitary gland, cerebellum, medulla oblongata, pons, thalamus and spinal cord. Expressed in the epidermis. Expressed at lower level in lung, spleen, adrenal gland, placenta, prostate, testis, mammary gland and trachea.

It localises to the golgi apparatus membrane. Its function is as follows. Catalyzes the transfer of sulfate to position 4 of non-reducing N-acetylgalactosamine (GalNAc) residues in both N-glycans and O-glycans. Required for biosynthesis of glycoprotein hormones lutropin and thyrotropin, by mediating sulfation of their carbohydrate structures. Only active against terminal GalNAcbeta1,GalNAcbeta. Not active toward chondroitin. This chain is Carbohydrate sulfotransferase 8 (CHST8), found in Homo sapiens (Human).